The chain runs to 154 residues: DNA gyrase inhibitor (154 aa).

It belongs to the DNA gyrase inhibitor family. Interacts with DNA gyrase.

The protein resides in the cytoplasm. Functionally, inhibits the supercoiling activity of DNA gyrase. Acts by inhibiting DNA gyrase at an early step, prior to (or at the step of) binding of DNA by the gyrase. It protects cells against toxins that target DNA gyrase, by inhibiting activity of these toxins and reducing the formation of lethal double-strand breaks in the cell. The chain is DNA gyrase inhibitor from Pectobacterium carotovorum subsp. carotovorum (strain PC1).